A 1054-amino-acid chain; its full sequence is Reverse gyrase (1054 aa).

The RG N-terminal-type zinc-finger motif lies at Met-1–Leu-43. Cys-10, Cys-13, Cys-27, and Cys-35 together coordinate Zn(2+). Cys-35 and Cys-650 form a disulfide bridge. ATP contacts are provided by Gln-61, Lys-84, Thr-85, and Ser-86. Residues Ala-65–Gly-245 enclose the Helicase ATP-binding domain. The short motif at Asp-182–Asp-185 is the DEAD box element. The segment at Pro-352–Arg-427 is latch region. Residues Asp-502–Asp-1054 form a topoisomerase I region. The region spanning Pro-506–Thr-662 is the Toprim domain. Position 512 (Glu-512) interacts with Mg(2+). An RG C-terminal-type zinc finger spans residues Ile-581–Ser-609. Zn(2+)-binding residues include Cys-584, Cys-587, Cys-598, and Cys-601. Asp-631 lines the Mg(2+) pocket. The Topo IA-type catalytic domain maps to Asp-677–Asp-1054. Tyr-809 serves as the catalytic O-(5'-phospho-DNA)-tyrosine intermediate.

The protein in the N-terminal section; belongs to the DEAD box helicase family. DDVD subfamily. It in the C-terminal section; belongs to the type IA topoisomerase family. In terms of assembly, monomer. Requires Zn(2+) as cofactor. Mg(2+) serves as cofactor.

The protein localises to the cytoplasm. It carries out the reaction ATP + H2O = ADP + phosphate + H(+). In terms of biological role, modifies the topological state of DNA by introducing positive supercoils in an ATP-dependent process, increasing the linking number in steps of +1. Very efficient supercoiling occurs on relaxed DNA with a single-stranded bubble; the minimal bubble is 20 nucleotides (nt) and up to 10 positive supercoils can be introduced into a 3.1 kb plasmid with a 50 nt bubble. Positively supercoils DNA with all (d)NTPS, although it requires about 10-fold more of non-(d)ATP. In the absence of ATP (or at low levels of enzyme), or in the presence of ADP, relaxes negative supercoils. Only relaxes positive supercoils when the substrate contains a bubble. Also promotes strand annealing of complementary ssDNA circles. Binds to single-stranded DNA, transiently cleaves and then rejoins the ends, introducing a positive supercoil in the process. The scissile phosphodiester is attacked by the catalytic tyrosine of the enzyme, resulting in the formation of a DNA-(5'-phosphotyrosyl)-enzyme intermediate. Probably involved in rewinding DNA strands in regions of the chromosome that have opened up to allow replication, transcription, DNA repair and/or for DNA protection. Functionally, in vitro protects DNA against degradation at 90 degrees Celsius, reducing dsDNA breakage about 8-fold; ATP hydrolysis is not necessary, while ADP decreases the protection somewhat. Coats all forms of dsDNA; the DNA is protected against cleavage and transcription. Recognizes nicked DNA and forms a coat at the nicking site, which may help hold DNA in a structure amenable to repair. The chain is Reverse gyrase from Archaeoglobus fulgidus (strain ATCC 49558 / DSM 4304 / JCM 9628 / NBRC 100126 / VC-16).